The primary structure comprises 261 residues: Cytochrome c oxidase subunit 3 (261 aa).

Topologically, residues 1-15 are mitochondrial matrix; the sequence is MTHQTHAYHMVNPSP. The helical transmembrane segment at 16-34 threads the bilayer; that stretch reads WPLTGALSALLMTSGLIMW. The Mitochondrial intermembrane portion of the chain corresponds to 35–40; sequence FHFNSM. A helical transmembrane segment spans residues 41-66; the sequence is YLLMLGLTTNTLTMYQWWRDIVREST. At 67–72 the chain is on the mitochondrial matrix side; sequence FQGHHT. A helical transmembrane segment spans residues 73-105; the sequence is PIVQKGLRYGMILFIVSEVFFFAGFFWAFYHSS. Residues 106 to 128 lie on the Mitochondrial intermembrane side of the membrane; sequence LAPTPELGGCWPPTGITPLNPME. A helical membrane pass occupies residues 129-152; that stretch reads VPLLNTSVLLASGVSITWAHHSLM. Topologically, residues 153-155 are mitochondrial matrix; sequence EGN. The chain crosses the membrane as a helical span at residues 156-183; it reads RKHMLQALFITISLGVYFTLLQASEYYE. Residues 184 to 190 are Mitochondrial intermembrane-facing; sequence TPFTISD. The chain crosses the membrane as a helical span at residues 191–223; the sequence is GIYGSTFFMATGFHGLHVIIGSTFLIVCFMRQL. At 224 to 232 the chain is on the mitochondrial matrix side; that stretch reads KFHFTSNHH. Residues 233 to 256 traverse the membrane as a helical segment; the sequence is FGFEAAAWYWHFVDVVWLFLYVSI. Over 257–261 the chain is Mitochondrial intermembrane; the sequence is YWWGS.

Belongs to the cytochrome c oxidase subunit 3 family. As to quaternary structure, component of the cytochrome c oxidase (complex IV, CIV), a multisubunit enzyme composed of 14 subunits. The complex is composed of a catalytic core of 3 subunits MT-CO1, MT-CO2 and MT-CO3, encoded in the mitochondrial DNA, and 11 supernumerary subunits COX4I, COX5A, COX5B, COX6A, COX6B, COX6C, COX7A, COX7B, COX7C, COX8 and NDUFA4, which are encoded in the nuclear genome. The complex exists as a monomer or a dimer and forms supercomplexes (SCs) in the inner mitochondrial membrane with NADH-ubiquinone oxidoreductase (complex I, CI) and ubiquinol-cytochrome c oxidoreductase (cytochrome b-c1 complex, complex III, CIII), resulting in different assemblies (supercomplex SCI(1)III(2)IV(1) and megacomplex MCI(2)III(2)IV(2)).

It localises to the mitochondrion inner membrane. It carries out the reaction 4 Fe(II)-[cytochrome c] + O2 + 8 H(+)(in) = 4 Fe(III)-[cytochrome c] + 2 H2O + 4 H(+)(out). In terms of biological role, component of the cytochrome c oxidase, the last enzyme in the mitochondrial electron transport chain which drives oxidative phosphorylation. The respiratory chain contains 3 multisubunit complexes succinate dehydrogenase (complex II, CII), ubiquinol-cytochrome c oxidoreductase (cytochrome b-c1 complex, complex III, CIII) and cytochrome c oxidase (complex IV, CIV), that cooperate to transfer electrons derived from NADH and succinate to molecular oxygen, creating an electrochemical gradient over the inner membrane that drives transmembrane transport and the ATP synthase. Cytochrome c oxidase is the component of the respiratory chain that catalyzes the reduction of oxygen to water. Electrons originating from reduced cytochrome c in the intermembrane space (IMS) are transferred via the dinuclear copper A center (CU(A)) of subunit 2 and heme A of subunit 1 to the active site in subunit 1, a binuclear center (BNC) formed by heme A3 and copper B (CU(B)). The BNC reduces molecular oxygen to 2 water molecules using 4 electrons from cytochrome c in the IMS and 4 protons from the mitochondrial matrix. The sequence is that of Cytochrome c oxidase subunit 3 (MT-CO3) from Halichoerus grypus (Gray seal).